Reading from the N-terminus, the 251-residue chain is 5'-nucleotidase SurE (251 aa).

Residues Asp9, Asp10, Ser40, and Asn94 each coordinate a divalent metal cation.

Belongs to the SurE nucleotidase family. Requires a divalent metal cation as cofactor.

It is found in the cytoplasm. It carries out the reaction a ribonucleoside 5'-phosphate + H2O = a ribonucleoside + phosphate. Functionally, nucleotidase that shows phosphatase activity on nucleoside 5'-monophosphates. This chain is 5'-nucleotidase SurE, found in Aquifex aeolicus (strain VF5).